Reading from the N-terminus, the 197-residue chain is Peptide deformylase (197 aa).

The Fe cation site is built by C106 and H148. The active site involves E149. Residue H152 coordinates Fe cation.

Belongs to the polypeptide deformylase family. Requires Fe(2+) as cofactor.

The catalysed reaction is N-terminal N-formyl-L-methionyl-[peptide] + H2O = N-terminal L-methionyl-[peptide] + formate. Removes the formyl group from the N-terminal Met of newly synthesized proteins. Requires at least a dipeptide for an efficient rate of reaction. N-terminal L-methionine is a prerequisite for activity but the enzyme has broad specificity at other positions. The sequence is that of Peptide deformylase from Mycobacterium leprae (strain TN).